A 224-amino-acid chain; its full sequence is Synaptogyrin-2 (224 aa).

M1 carries the N-acetylmethionine modification. S3 bears the Phosphoserine mark. Positions 20–171 constitute an MARVEL domain; the sequence is FLSQPQVVTR…LASLAYQRYK (152 aa). 4 helical membrane passes run 31–51, 72–92, 105–125, and 147–167; these read VSMV…YTNI, SAIG…DAFF, VIGD…GFCF, and AAIT…SLAY.

Belongs to the synaptogyrin family. Post-translationally, may be tyrosine phosphorylated by Src.

It localises to the cytoplasmic vesicle membrane. The protein localises to the cytoplasmic vesicle. The protein resides in the secretory vesicle. Its subcellular location is the synaptic vesicle membrane. May play a role in regulated exocytosis. In neuronal cells, modulates the localization of synaptophysin/SYP into synaptic-like microvesicles and may therefore play a role in the formation and/or the maturation of this vesicles. May also play a role in GLUT4 storage and transport to the plasma membrane. The polypeptide is Synaptogyrin-2 (Mus musculus (Mouse)).